Reading from the N-terminus, the 129-residue chain is C-phycocyanin beta subunit (129 aa).

N62 bears the N4-methylasparagine mark. C116 lines the (2R,3E)-phycocyanobilin pocket.

The protein belongs to the phycobiliprotein family. As to quaternary structure, heterodimer of an alpha and a beta subunit, which further assembles into trimers and the trimers into hexamers. In terms of processing, two isomers exist. Post-translationally, contains two covalently linked bilin chromophores.

The protein resides in the cellular thylakoid membrane. Light-harvesting photosynthetic bile pigment-protein from the phycobiliprotein complex (phycobilisome, PBS). Phycocyanin is the major phycobiliprotein in the PBS rod. The chain is C-phycocyanin beta subunit from Aphanizomenon flos-aquae.